We begin with the raw amino-acid sequence, 155 residues long: Cytochrome c-type biogenesis protein CcmE (155 aa).

At 1–8 (MNPVRKRR) the chain is on the cytoplasmic side. Residues 9 to 29 (LFIVLAILAGVGAAVALALSA) traverse the membrane as a helical; Signal-anchor for type II membrane protein segment. The Periplasmic portion of the chain corresponds to 30–155 (LQQNINLFYT…YENGKPGGAQ (126 aa)). Heme is bound by residues His124 and Tyr128.

Belongs to the CcmE/CycJ family.

The protein resides in the cell inner membrane. Its function is as follows. Heme chaperone required for the biogenesis of c-type cytochromes. Transiently binds heme delivered by CcmC and transfers the heme to apo-cytochromes in a process facilitated by CcmF and CcmH. This chain is Cytochrome c-type biogenesis protein CcmE, found in Azotobacter vinelandii (strain DJ / ATCC BAA-1303).